We begin with the raw amino-acid sequence, 671 residues long: UvrABC system protein B (671 aa).

The region spanning 26-414 (EGLENGLAHQ…GGDIIEQVVR (389 aa)) is the Helicase ATP-binding domain. Residue 39 to 46 (GVTGSGKT) participates in ATP binding. Residues 92-115 (YYDYYQPEAYVPSSDTFIEKDASV) carry the Beta-hairpin motif. Residues 431 to 593 (QVDDLLSEIR…IIPQGLNKKI (163 aa)) enclose the Helicase C-terminal domain. Positions 631–666 (DQKIRELEAKMYTYAQNLEFEQAAELRDQVHQLRQQ) constitute a UVR domain.

The protein belongs to the UvrB family. In terms of assembly, forms a heterotetramer with UvrA during the search for lesions. Interacts with UvrC in an incision complex.

The protein localises to the cytoplasm. In terms of biological role, the UvrABC repair system catalyzes the recognition and processing of DNA lesions. A damage recognition complex composed of 2 UvrA and 2 UvrB subunits scans DNA for abnormalities. Upon binding of the UvrA(2)B(2) complex to a putative damaged site, the DNA wraps around one UvrB monomer. DNA wrap is dependent on ATP binding by UvrB and probably causes local melting of the DNA helix, facilitating insertion of UvrB beta-hairpin between the DNA strands. Then UvrB probes one DNA strand for the presence of a lesion. If a lesion is found the UvrA subunits dissociate and the UvrB-DNA preincision complex is formed. This complex is subsequently bound by UvrC and the second UvrB is released. If no lesion is found, the DNA wraps around the other UvrB subunit that will check the other stand for damage. The sequence is that of UvrABC system protein B from Yersinia pestis.